A 405-amino-acid chain; its full sequence is Acetylornithine/succinyldiaminopimelate aminotransferase (405 aa).

Residues 107–108 (GA) and phenylalanine 140 each bind pyridoxal 5'-phosphate. Position 143 (arginine 143) interacts with N(2)-acetyl-L-ornithine. 225 to 228 (DEVQ) contacts pyridoxal 5'-phosphate. Lysine 254 bears the N6-(pyridoxal phosphate)lysine mark. Threonine 282 is a binding site for N(2)-acetyl-L-ornithine. Threonine 283 contacts pyridoxal 5'-phosphate.

It belongs to the class-III pyridoxal-phosphate-dependent aminotransferase family. ArgD subfamily. As to quaternary structure, homodimer. Pyridoxal 5'-phosphate is required as a cofactor.

The protein localises to the cytoplasm. The enzyme catalyses N(2)-acetyl-L-ornithine + 2-oxoglutarate = N-acetyl-L-glutamate 5-semialdehyde + L-glutamate. It catalyses the reaction N-succinyl-(2S,6S)-2,6-diaminopimelate + 2-oxoglutarate = (S)-2-succinylamino-6-oxoheptanedioate + L-glutamate. Its pathway is amino-acid biosynthesis; L-arginine biosynthesis; N(2)-acetyl-L-ornithine from L-glutamate: step 4/4. It participates in amino-acid biosynthesis; L-lysine biosynthesis via DAP pathway; LL-2,6-diaminopimelate from (S)-tetrahydrodipicolinate (succinylase route): step 2/3. Its function is as follows. Involved in both the arginine and lysine biosynthetic pathways. The polypeptide is Acetylornithine/succinyldiaminopimelate aminotransferase (Yersinia pestis).